The sequence spans 325 residues: Elongation factor P--(R)-beta-lysine ligase (325 aa).

76 to 78 (SPE) contributes to the substrate binding site. Residues 100 to 102 (RNE) and Asn-109 contribute to the ATP site. Tyr-118 lines the substrate pocket. Residue 244 to 245 (EL) coordinates ATP. Glu-251 is a substrate binding site. Gly-300 is a binding site for ATP.

This sequence belongs to the class-II aminoacyl-tRNA synthetase family. EpmA subfamily. As to quaternary structure, homodimer.

The enzyme catalyses D-beta-lysine + L-lysyl-[protein] + ATP = N(6)-((3R)-3,6-diaminohexanoyl)-L-lysyl-[protein] + AMP + diphosphate + H(+). Its function is as follows. With EpmB is involved in the beta-lysylation step of the post-translational modification of translation elongation factor P (EF-P). Catalyzes the ATP-dependent activation of (R)-beta-lysine produced by EpmB, forming a lysyl-adenylate, from which the beta-lysyl moiety is then transferred to the epsilon-amino group of a conserved specific lysine residue in EF-P. The chain is Elongation factor P--(R)-beta-lysine ligase from Proteus mirabilis (strain HI4320).